The chain runs to 661 residues: Peroxisomal acyl-coenzyme A oxidase 1 (661 aa).

Serine 26 bears the Phosphoserine mark. Residue lysine 65 is modified to N6-acetyllysine. Residues lysine 89 and lysine 90 each carry the N6-succinyllysine modification. Threonine 139 contacts FAD. Position 159 is an N6-succinyllysine (lysine 159). Position 178 (glycine 178) interacts with FAD. Lysine 216 is modified (N6-acetyllysine). Lysine 241 is modified (N6-succinyllysine). Lysine 255, lysine 267, and lysine 272 each carry N6-acetyllysine. Lysine 349 is modified (N6-succinyllysine). The active-site Proton acceptor is glutamate 421. N6-acetyllysine; alternate is present on residues lysine 437 and lysine 446. Lysine 437 and lysine 446 each carry N6-succinyllysine; alternate. Lysine 500 carries the post-translational modification N6-acetyllysine. Lysine 512 is modified (N6-acetyllysine; alternate). Residue lysine 512 is modified to N6-succinyllysine; alternate. Lysine 542 bears the N6-succinyllysine mark. Lysine 637 carries the post-translational modification N6-acetyllysine; alternate. At lysine 637 the chain carries N6-succinyllysine; alternate. Residue lysine 643 is modified to N6-succinyllysine. Serine 649 carries the post-translational modification Phosphoserine. Lysine 652 bears the N6-acetyllysine mark. An N6-succinyllysine modification is found at lysine 655. Residues 659–661 (SKL) carry the Microbody targeting signal motif.

It belongs to the acyl-CoA oxidase family. In terms of assembly, homodimer. Interacts with LONP2. It depends on FAD as a cofactor. Highest levels of isoform 1 are found in liver and kidney while highest levels of isoform 2 are found in white adipose tissue. Isoform 1 is expressed at higher levels than isoform 2 in liver and kidney while isoform 2 is expressed at higher levels in brain, heart, lung, muscle, white adipose tissue and testis.

The protein resides in the peroxisome. The enzyme catalyses a 2,3-saturated acyl-CoA + O2 = a (2E)-enoyl-CoA + H2O2. It carries out the reaction hexadecanoyl-CoA + O2 = (2E)-hexadecenoyl-CoA + H2O2. It catalyses the reaction dodecanoyl-CoA + O2 = (2E)-dodecenoyl-CoA + H2O2. The catalysed reaction is octanoyl-CoA + O2 = (2E)-octenoyl-CoA + H2O2. The enzyme catalyses decanoyl-CoA + O2 = (2E)-decenoyl-CoA + H2O2. It carries out the reaction tetradecanoyl-CoA + O2 = (2E)-tetradecenoyl-CoA + H2O2. It catalyses the reaction hexadecanedioyl-CoA + O2 = (2E)-hexadecenedioyl-CoA + H2O2. The catalysed reaction is tetracosanoyl-CoA + O2 = (2E)-tetracosenoyl-CoA + H2O2. The enzyme catalyses glutaryl-CoA + O2 = (2E)-glutaconyl-CoA + H2O2. It carries out the reaction hexanoyl-CoA + O2 = (2E)-hexenoyl-CoA + H2O2. It catalyses the reaction octadecanoyl-CoA + O2 = (2E)-octadecenoyl-CoA + H2O2. The catalysed reaction is (5Z,8Z,11Z,14Z,17Z)-eicosapentaenoyl-CoA + O2 = (2E,5Z,8Z,11Z,14Z,17Z)-icosahexaenoyl-CoA + H2O2. The enzyme catalyses (6Z,9Z,12Z,15Z,18Z,21Z)-tetracosahexaenoyl-CoA + O2 = (2E,6Z,9Z,12Z,15Z,18Z,21Z)-tetracosaheptaenoyl-CoA + H2O2. It functions in the pathway lipid metabolism; peroxisomal fatty acid beta-oxidation. Its function is as follows. Involved in the initial and rate-limiting step of peroxisomal beta-oxidation of straight-chain saturated and unsaturated very-long-chain fatty acids. Catalyzes the desaturation of fatty acyl-CoAs such as palmitoyl-CoA (hexadecanoyl-CoA) to 2-trans-enoyl-CoAs ((2E)-enoyl-CoAs) such as (2E)-hexadecenoyl-CoA, and donates electrons directly to molecular oxygen (O(2)), thereby producing hydrogen peroxide (H(2)O(2)). Functionally, shows highest activity against medium-chain fatty acyl-CoAs. Shows optimum activity with a chain length of 10 carbons (decanoyl-CoA) in vitro. In terms of biological role, is active against a much broader range of substrates and shows activity towards long-chain acyl-CoAs. The polypeptide is Peroxisomal acyl-coenzyme A oxidase 1 (Mus musculus (Mouse)).